The chain runs to 225 residues: UPF0758 protein Sama_0327 (225 aa).

Residues 102-224 (VLTSPDLTRD…IVSFAERGWI (123 aa)) form the MPN domain. The Zn(2+) site is built by H173, H175, and D186. Positions 173-186 (HNHPSGVAEPSQAD) match the JAMM motif motif.

Belongs to the UPF0758 family.

The protein is UPF0758 protein Sama_0327 of Shewanella amazonensis (strain ATCC BAA-1098 / SB2B).